Here is a 45-residue protein sequence, read N- to C-terminus: uncharacterized protein (45 aa).

Residues 5 to 25 form a helical membrane-spanning segment; that stretch reads IFFIFALSGILAACTVGGGVS.

The protein localises to the membrane. This is an uncharacterized protein from Haemophilus influenzae (strain ATCC 51907 / DSM 11121 / KW20 / Rd).